The sequence spans 77 residues: Apelin (77 aa).

Residues 1–22 (MNVKILTLVIVLVVSLLCSASA) form the signal peptide. Residues 21–77 (SAGPMASTEHSKEIEEVGSMRTPLRQNPARAGRSQRPAGWRRRRPRPRLSHKGPMPF) are disordered. Basic residues predominate over residues 59-71 (GWRRRRPRPRLSH).

It belongs to the apelin family.

The protein localises to the secreted. Its subcellular location is the extracellular space. Peptide hormone that functions as endogenous ligand for the G-protein-coupled apelin receptor (aplnra and/or aplnrb), that plays a role in cadiovascular homeostasis. Functions as a balanced agonist activating both G(i) protein pathway and beta-arrestin pathway of APLNR. Downstream G proteins activation, apelin can inhibit cAMP production and activate key intracellular effectors such as ERKs. On the other hand, APLNR activation induces beta-arrestin recruitment to the membrane leading to desensitization and internalization of the receptor. Apelin blunts cardiac hypertrophic induction from APLNR on response to pathological stimuli, but also induces myocardial hypertrophy under normal conditions. Involved in the regulation of cardiac precursor cell movements during gastrulation and heart morphogenesis. Plays a role in early coronary blood vessels formation. Mediates myocardial contractility in an ERK1/2-dependent manner. May also have a role in the central control of body fluid homeostasis. The polypeptide is Apelin (Danio rerio (Zebrafish)).